Consider the following 208-residue polypeptide: N-hydroxyputrescine acetyltransferase (208 aa).

Belongs to the IucB family.

It carries out the reaction N-hydroxyputrescine + acetyl-CoA = N(1)-acetyl-N(1)-hydroxyputrescine + CoA. It participates in siderophore biosynthesis. Its function is as follows. N-acetyltransferase involved in the biosynthesis of fimsbactin A, the major siderophore produced by A.baumannii. Catalyzes the acetylation of N-hydroxyputrescine to form N(1)-acetyl-N(1)-hydroxyputrescine (ahPutr). The protein is N-hydroxyputrescine acetyltransferase of Acinetobacter baumannii (strain ATCC 17978 / DSM 105126 / CIP 53.77 / LMG 1025 / NCDC KC755 / 5377).